Here is a 416-residue protein sequence, read N- to C-terminus: Probable sarcosine oxidase (416 aa).

10-40 (DVIVVGAGVMGSSAAYQLAKRGQKTLLLEQF) lines the FAD pocket. Cysteine 325 carries the post-translational modification S-8alpha-FAD cysteine.

This sequence belongs to the MSOX/MTOX family. FAD serves as cofactor.

It catalyses the reaction sarcosine + O2 + H2O = formaldehyde + glycine + H2O2. The protein is Probable sarcosine oxidase of Arabidopsis thaliana (Mouse-ear cress).